We begin with the raw amino-acid sequence, 223 residues long: Cytotoxic T-lymphocyte protein 4 (223 aa).

A signal peptide spans 1–35 (MACSGFQSHGAWLELTSRTWPCTALFSLLFIPVFS). Topologically, residues 38–161 (MHVAQPAVVL…IDPEPCPDSD (124 aa)) are extracellular. The Ig-like V-type domain maps to 39-140 (HVAQPAVVLA…VELLYPPPYY (102 aa)). Residues 46-50 (VLANS) form a homodimerization region. 2 disulfide bridges follow: cysteine 58–cysteine 129 and cysteine 85–cysteine 103. N-linked (GlcNAc...) asparagine glycosylation is present at asparagine 113. Residues 134–139 (LYPPPY) are important for interaction with CD80 and CD86. An N-linked (GlcNAc...) asparagine glycan is attached at asparagine 145. Positions 150–155 (YVIDPE) are homodimerization. Residues 162 to 182 (FLLWILAAVSSGLFFYSFLIT) form a helical membrane-spanning segment. Topologically, residues 183-223 (AVSLSKMLKKRSPLTTGVYVKMPPTEPECEKQFQPYFIPIN) are cytoplasmic. A Phosphotyrosine; by TXK and JAK2 modification is found at tyrosine 201.

As to quaternary structure, homodimer; disulfide-linked. Binds to CD80/B7-1 and CD86/B7.2. Interacts with ICOSLG. Post-translationally, N-glycosylation is important for dimerization. In terms of processing, phosphorylation at Tyr-201 prevents binding to the AP-2 adapter complex, blocks endocytosis, and leads to retention of CTLA4 on the cell surface.

The protein localises to the cell membrane. Inhibitory receptor acting as a major negative regulator of T-cell responses. The affinity of CTLA4 for its natural B7 family ligands, CD80 and CD86, is considerably stronger than the affinity of their cognate stimulatory coreceptor CD28. This is Cytotoxic T-lymphocyte protein 4 (CTLA4) from Sus scrofa (Pig).